The primary structure comprises 619 residues: E3 ubiquitin-protein ligase complex SLX5-SLX8 subunit SLX5 (619 aa).

The disordered stretch occupies residues 1-23 (MHSDTNGRTKSNNSPSDNNPNET). Positions 11-21 (SNNSPSDNNPN) are enriched in low complexity. Residues S14 and S29 each carry the phosphoserine modification. The interval 63–90 (VRSDSRSRNSQRTHITASSERPDFQANN) is disordered. Residues 70–90 (RNSQRTHITASSERPDFQANN) are compositionally biased toward polar residues. Positions 201-335 (SRRQLLRRSA…ALFTEFRNQL (135 aa)) are EUC1 interaction domain.

In terms of assembly, component of the heterodimeric SUMO-targeted ubiquitin ligase (STUbL) complex composed of SLX5 and SLX8. Interacts with sirtuin SIR2. Interacts with KAR9. Interacts with EUC1.

Its subcellular location is the nucleus. It localises to the chromosome. The protein localises to the centromere. The protein resides in the kinetochore. It catalyses the reaction S-ubiquitinyl-[E2 ubiquitin-conjugating enzyme]-L-cysteine + [acceptor protein]-L-lysine = [E2 ubiquitin-conjugating enzyme]-L-cysteine + N(6)-ubiquitinyl-[acceptor protein]-L-lysine.. It functions in the pathway protein modification; protein ubiquitination. Component of the SUMO-targeted ubiquitin ligase (STUbL) complex SLX5/SLX8 that mediates ubiquitination and subsequent desumoylation of sumoylated proteins and proteins containing SUMO-like domains for their degradation. The STUbL complex SLX5/SLX8 stimulates ubiquitin conjugating enzymes, including UBC1, UBC4, UBC5 and UBC13-MMS2, and mediates the proteolytic down-regulation of sumoylated proteins. The STUbL complex SLX5/SLX8 is involved in ubiquitin-mediated degradation of histone variant CSE4, preventing mislocalization to euchromatin. The complex plays an essential role in maintenance of chromosome stability and links SUMO-dependent ubiquitination to a centromere-specific function during mitosis. The complex is involved in proteolysis of spindle positioning protein KAR9 and ensures correct spindle function by regulating levels of microtubule-associated proteins. During replication, the complex helps prevent DNA lesions via recombination and has a role in localizing the DNA damage protein DCD2. The complex especially ubiquitinates the nuclease YEN1 and prevents persistent accumulation of a fraction of YEN1 associated with sites of activity in late G2/M and helps maintain the balance between pro- and anti-crossover pathways during homologous recombination. It is also involved in ubiquitin-mediated degradation of DNA repair proteins RAD52 and RAD57. Along with SIR2, promotes silencing of genes at telomeric or ribosomal DNA (rDNA) loci. Finally, the complex is recruited to distinct genomic hotspots of non-H2B protein ubiquitination (ub-hotspots) by the sumoylated transcription factor-like protein EUC1 where it ubiquitinates EUC1 and presumably other targets. This chain is E3 ubiquitin-protein ligase complex SLX5-SLX8 subunit SLX5 (SLX5), found in Saccharomyces cerevisiae (strain ATCC 204508 / S288c) (Baker's yeast).